The sequence spans 126 residues: MASGGGGGGGMEAVEVRFRLDDGSDIGPSMHDQATTVTALKEFVLARWPQGKEIAPRTVNDVTIINAGQVLENNRTLAESRNLAAESPEGPITMHVVVRRSRPERRVKQPPKARPPERIGCGCTIL.

The Ubiquitin-like domain maps to 14–79 (VEVRFRLDDG…VLENNRTLAE (66 aa)). At Cys-123 the chain carries Cysteine methyl ester. Cys-123 is lipidated: S-geranylgeranyl cysteine. Positions 124 to 126 (TIL) are cleaved as a propeptide — removed in mature form.

It is found in the cell membrane. Functionally, may serve as docking site to facilitate the association of other proteins to the plasma membrane. The sequence is that of Membrane-anchored ubiquitin-fold protein 2 (MUB2) from Oryza sativa subsp. japonica (Rice).